A 1099-amino-acid polypeptide reads, in one-letter code: Sterol regulatory element-binding protein 2 (1099 aa).

The interval methionine 1–methionine 47 is transcriptional activation (acidic). The Cytoplasmic portion of the chain corresponds to methionine 1–arginine 461. The disordered stretch occupies residues leucine 65 to arginine 107. Residues proline 71 to threonine 100 show a composition bias toward low complexity. One can recognise a bHLH domain in the interval glutamate 320–leucine 370. Positions leucine 370–asparagine 391 are leucine-zipper. Residues leucine 462–glycine 482 traverse the membrane as a helical segment. The Lumenal segment spans residues alanine 483–alanine 513. The chain crosses the membrane as a helical span at residues tryptophan 514–tryptophan 534. Residues glycine 535–serine 1099 lie on the Cytoplasmic side of the membrane.

This sequence belongs to the SREBP family. Forms a tight complex with scap, the SCAP-SREBP complex, in the endoplasmic reticulum membrane. As to quaternary structure, homodimer; efficient DNA binding of the soluble transcription factor fragment requires dimerization with another bHLH protein. Post-translationally, processed in the Golgi apparatus, releasing the protein from the membrane. At low cholesterol the SCAP-SREBP complex is recruited into COPII vesicles for export from the endoplasmic reticulum. In the Golgi, complex SREBPs are cleaved sequentially by site-1 (mbtps1, S1P) and site-2 (mbtps2, S2P) protease. The first cleavage by site-1 protease occurs within the luminal loop, the second cleavage by site-2 protease occurs within the first transmembrane domain, releasing the transcription factor from the Golgi membrane.

The protein resides in the endoplasmic reticulum membrane. The protein localises to the golgi apparatus membrane. It is found in the cytoplasmic vesicle. It localises to the COPII-coated vesicle membrane. Its subcellular location is the nucleus. Functionally, precursor of the transcription factor form (Processed sterol regulatory element-binding protein 2), which is embedded in the endoplasmic reticulum membrane. Low sterol concentrations promote processing of this form, releasing the transcription factor form that translocates into the nucleus and activates transcription of genes involved in cholesterol biosynthesis. Its function is as follows. Key transcription factor that regulates expression of genes involved in cholesterol biosynthesis. Binds to the sterol regulatory element 1 (SRE-1) (5'-ATCACCCCAC-3'). Has dual sequence specificity binding to both an E-box motif (5'-ATCACGTGA-3') and to SRE-1 (5'-ATCACCCCAC-3'). Regulates transcription of genes related to cholesterol synthesis pathway. Activated by mediated cholesterol efflux, transactivates NOTCH and promotes hematopoietic stem and progenitor cell emergence. The chain is Sterol regulatory element-binding protein 2 from Danio rerio (Zebrafish).